We begin with the raw amino-acid sequence, 298 residues long: Short-chain dehydrogenase/reductase prx6 (298 aa).

Residues Ile-27, Asp-70, Asn-97, Tyr-174, Lys-178, Val-208, and Thr-210 each coordinate NADP(+). Tyr-174 (proton acceptor) is an active-site residue. The Lowers pKa of active site Tyr role is filled by Lys-178.

The protein belongs to the short-chain dehydrogenases/reductases (SDR) family.

Its pathway is sesquiterpene biosynthesis. Its function is as follows. Short-chain dehydrogenase/reductase; part of the gene cluster that mediates the biosynthesis of PR-toxin, a bicyclic sesquiterpene belonging to the eremophilane class and acting as a mycotoxin. The first step of the pathway is catalyzed by the aristolochene synthase which performs the cyclization of trans,trans-farnesyl diphosphate (FPP) to the bicyclic sesquiterpene aristolochene. Following the formation of aristolochene, the non-oxygenated aristolochene is converted to the trioxygenated intermediate eremofortin B, via 7-epi-neopetasone. This conversion appears to involve three enzymes, a hydroxysterol oxidase-like enzyme, the quinone-oxidase prx3 that forms the quinone-type-structure in the bicyclic nucleus of aristolochene with the C8-oxo group and the C-3 hydroxyl group, and the P450 monooxygenase prx9 that introduces the epoxide at the double bond between carbons 1 and 2. No monoxy or dioxy-intermediates have been reported to be released to the broth, so these three early oxidative reactions may be coupled together. Eremofortin B is further oxidized by another P450 monooxygenase, that introduces a second epoxide between carbons 7 and 11 prior to acetylation to eremofortin A by the acetyltransferase prx11. The second epoxidation may be performed by a second P450 monooxygenase. After the acetylation step, eremofortin A is converted to eremofortin C and then to PR-toxin. First the conversion of eremofortin A to eremofortin C proceeds by oxidation of the side chain of the molecule at C-12 and is catalyzed by the short-chain oxidoreductase prx1. The cytochrome P450 monooxygenase prx8 also plays a role in this step. The primary alcohol formed at C-12 is finally oxidized by the short-chain alcohol dehydrogenase prx4 that forms PR-toxin. In Penicillium rubens (strain ATCC 28089 / DSM 1075 / NRRL 1951 / Wisconsin 54-1255) (Penicillium chrysogenum), this protein is Short-chain dehydrogenase/reductase prx6.